Here is a 552-residue protein sequence, read N- to C-terminus: MAAKEVKFSDSARHKMVNGVNILADAVKVTLGPKGRNVVLERSYGSPTITKDGVSVAKEIELKDKFENMGAQMVKEVASKTSDVAGDGTTTATVLAQSIVKEGMKYVAAGMNPMDLKRGIDKAVVATVEELKKLSKPCTTGKEIAQVGSISANSDPEIGKIIADAMEKVGKEGVITVEDGSGLQNELEVVEGMQFDRGYLSPYFINNADRQIALLESPFILLHDKKISNIRDLLPVLEQVAKAGKPLLIIAEDVDGEALATLVVNNIRGILKTCAVKAPGFGDRRKAMLEDIAILTGGTVIAEEVGLSLEKATLAELGQAKRVEVGKEETTIIDGAGDTQNIEGRVKQIRAQIEEATSDYDKEKLQERVAKLAGGVALIKVGAATEVEMKEKKARVEDALHATRAAVEEGIVPGGGVALLRTRSAVSNLKGDNHDQDAGIKIVLRALEEPLRQIVANCGDEPSVVINKVLEGTENFGYNAASSEYGDMVQMGVLDPTKVTRYALQHAASIAGLMLTTDALVAEVPKEEGAGGGMGGGMGGMGGMGGMGGMDM.

Residues 30–33 (TLGP), Lys51, 87–91 (DGTTT), Gly415, 479–481 (NAA), and Asp495 each bind ATP.

The protein belongs to the chaperonin (HSP60) family. As to quaternary structure, forms a cylinder of 14 subunits composed of two heptameric rings stacked back-to-back. Interacts with the co-chaperonin GroES.

It localises to the cytoplasm. The catalysed reaction is ATP + H2O + a folded polypeptide = ADP + phosphate + an unfolded polypeptide.. Together with its co-chaperonin GroES, plays an essential role in assisting protein folding. The GroEL-GroES system forms a nano-cage that allows encapsulation of the non-native substrate proteins and provides a physical environment optimized to promote and accelerate protein folding. This Nitrosospira multiformis (strain ATCC 25196 / NCIMB 11849 / C 71) protein is Chaperonin GroEL.